The following is a 442-amino-acid chain: Proline--tRNA ligase (442 aa).

It belongs to the class-II aminoacyl-tRNA synthetase family. ProS type 2 subfamily. Homodimer.

Its subcellular location is the cytoplasm. It carries out the reaction tRNA(Pro) + L-proline + ATP = L-prolyl-tRNA(Pro) + AMP + diphosphate. Catalyzes the attachment of proline to tRNA(Pro) in a two-step reaction: proline is first activated by ATP to form Pro-AMP and then transferred to the acceptor end of tRNA(Pro). This is Proline--tRNA ligase from Chelativorans sp. (strain BNC1).